The sequence spans 212 residues: Peptide methionine sulfoxide reductase MsrA (212 aa).

Residue C52 is part of the active site.

It belongs to the MsrA Met sulfoxide reductase family.

The enzyme catalyses L-methionyl-[protein] + [thioredoxin]-disulfide + H2O = L-methionyl-(S)-S-oxide-[protein] + [thioredoxin]-dithiol. It catalyses the reaction [thioredoxin]-disulfide + L-methionine + H2O = L-methionine (S)-S-oxide + [thioredoxin]-dithiol. Functionally, has an important function as a repair enzyme for proteins that have been inactivated by oxidation. Catalyzes the reversible oxidation-reduction of methionine sulfoxide in proteins to methionine. This chain is Peptide methionine sulfoxide reductase MsrA, found in Escherichia coli O17:K52:H18 (strain UMN026 / ExPEC).